The primary structure comprises 230 residues: LexA repressor (230 aa).

A DNA-binding region (H-T-H motif) is located at residues 28 to 48 (LREIGAHMGIRSTNGVNDHLR). Active-site for autocatalytic cleavage activity residues include Ser-149 and Lys-186.

The protein belongs to the peptidase S24 family. As to quaternary structure, homodimer.

The enzyme catalyses Hydrolysis of Ala-|-Gly bond in repressor LexA.. In terms of biological role, represses a number of genes involved in the response to DNA damage (SOS response), including recA and lexA. In the presence of single-stranded DNA, RecA interacts with LexA causing an autocatalytic cleavage which disrupts the DNA-binding part of LexA, leading to derepression of the SOS regulon and eventually DNA repair. The chain is LexA repressor from Sorangium cellulosum (strain So ce56) (Polyangium cellulosum (strain So ce56)).